A 273-amino-acid polypeptide reads, in one-letter code: Formamidopyrimidine-DNA glycosylase (273 aa).

Residue proline 2 is the Schiff-base intermediate with DNA of the active site. Glutamate 3 serves as the catalytic Proton donor. Lysine 57 acts as the Proton donor; for beta-elimination activity in catalysis. Residues histidine 91, arginine 110, and lysine 151 each coordinate DNA. An FPG-type zinc finger spans residues 236 to 270 (QVYGRKGEACNDCGTIIEAKVIGQRNSYFCPHCQI). Arginine 260 serves as the catalytic Proton donor; for delta-elimination activity.

Belongs to the FPG family. In terms of assembly, monomer. Zn(2+) serves as cofactor.

It carries out the reaction Hydrolysis of DNA containing ring-opened 7-methylguanine residues, releasing 2,6-diamino-4-hydroxy-5-(N-methyl)formamidopyrimidine.. The enzyme catalyses 2'-deoxyribonucleotide-(2'-deoxyribose 5'-phosphate)-2'-deoxyribonucleotide-DNA = a 3'-end 2'-deoxyribonucleotide-(2,3-dehydro-2,3-deoxyribose 5'-phosphate)-DNA + a 5'-end 5'-phospho-2'-deoxyribonucleoside-DNA + H(+). In terms of biological role, involved in base excision repair of DNA damaged by oxidation or by mutagenic agents. Acts as a DNA glycosylase that recognizes and removes damaged bases. Has a preference for oxidized purines, such as 7,8-dihydro-8-oxoguanine (8-oxoG). Has AP (apurinic/apyrimidinic) lyase activity and introduces nicks in the DNA strand. Cleaves the DNA backbone by beta-delta elimination to generate a single-strand break at the site of the removed base with both 3'- and 5'-phosphates. The chain is Formamidopyrimidine-DNA glycosylase from Actinobacillus pleuropneumoniae serotype 7 (strain AP76).